The following is a 369-amino-acid chain: 3-dehydroquinate synthase (369 aa).

Residues 71–76, 105–109, 129–130, K142, K151, and 169–172 each bind NAD(+); these read DGECHK, GVIND, TT, and TLST. Zn(2+) is bound by residues E184, H247, and H264.

It belongs to the sugar phosphate cyclases superfamily. Dehydroquinate synthase family. The cofactor is Co(2+). It depends on Zn(2+) as a cofactor. NAD(+) serves as cofactor.

The protein localises to the cytoplasm. The enzyme catalyses 7-phospho-2-dehydro-3-deoxy-D-arabino-heptonate = 3-dehydroquinate + phosphate. Its pathway is metabolic intermediate biosynthesis; chorismate biosynthesis; chorismate from D-erythrose 4-phosphate and phosphoenolpyruvate: step 2/7. In terms of biological role, catalyzes the conversion of 3-deoxy-D-arabino-heptulosonate 7-phosphate (DAHP) to dehydroquinate (DHQ). In Dichelobacter nodosus (strain VCS1703A), this protein is 3-dehydroquinate synthase.